Here is a 337-residue protein sequence, read N- to C-terminus: MVREKVTVSTRTLKWKCVESRTDSKRLYYGRFILSPLMKGQADTIGIAMRRALLGEIEGTCITRVKSEKVPHEYSTIMGIQESVHEILMNLKEIVLRSNLYGTSDASICVKGPGYVTAQDIILPPYVEIVDNTQHIASLTETIDFCIGLQIKRNRGYLIKTPHNFQDGSYPIDAVFMPVRNANHSIHSYGNGNEKQEILFLEIWTNGSLTPKEALHEASRNLIDLFIPFLHIEEDNLYLQDNQHTVPLSPFTFHDKLAKLIKNKKKIALKSIFIDQSELPSRIYNCLKMSNIYTLLDLLNNSQEDLMKIEHFRSEDVKQILGILEKYFVIDLAKNEF.

Residues 1–233 (MVREKVTVST…DLFIPFLHIE (233 aa)) form an alpha N-terminal domain (alpha-NTD) region. An alpha C-terminal domain (alpha-CTD) region spans residues 265-337 (KKIALKSIFI…FVIDLAKNEF (73 aa)).

This sequence belongs to the RNA polymerase alpha chain family. As to quaternary structure, in plastids the minimal PEP RNA polymerase catalytic core is composed of four subunits: alpha, beta, beta', and beta''. When a (nuclear-encoded) sigma factor is associated with the core the holoenzyme is formed, which can initiate transcription.

It localises to the plastid. Its subcellular location is the chloroplast. It carries out the reaction RNA(n) + a ribonucleoside 5'-triphosphate = RNA(n+1) + diphosphate. DNA-dependent RNA polymerase catalyzes the transcription of DNA into RNA using the four ribonucleoside triphosphates as substrates. In Nicotiana tomentosiformis (Tobacco), this protein is DNA-directed RNA polymerase subunit alpha.